Here is a 351-residue protein sequence, read N- to C-terminus: Peroxisomal membrane protein PEX14 (351 aa).

Residues 54–75 (KARTGTVQASPSQQSVVPPRPP) form a disordered region. Residues 60–70 (VQASPSQQSVV) show a composition bias toward low complexity. The short motif at 83-91 (APPLPERDW) is the SH3-binding element. Residues 243–351 (APQLSTPPSE…RGIPAWQLNA (109 aa)) form a disordered region. The segment covering 245 to 258 (QLSTPPSESTSRQS) has biased composition (polar residues). Over residues 283 to 293 (VLSREKDKDVN) the composition is skewed to basic and acidic residues. Residues 294-303 (SDSIAQYEQR) are compositionally biased toward polar residues. A compositionally biased stretch (low complexity) spans 320–334 (SASNGGSSTTSGVAG).

It belongs to the peroxin-14 family. In terms of assembly, interacts with PEX13 (via SH3 domain); forming the PEX13-PEX14 docking complex. Interacts with PEX5 (via WxxxF/Y motifs).

The protein localises to the peroxisome membrane. In terms of biological role, component of the PEX13-PEX14 docking complex, a translocon channel that specifically mediates the import of peroxisomal cargo proteins bound to PEX5 receptor. The PEX13-PEX14 docking complex forms a large import pore which can be opened to a diameter of about 9 nm. Mechanistically, PEX5 receptor along with cargo proteins associates with the PEX14 subunit of the PEX13-PEX14 docking complex in the cytosol, leading to the insertion of the receptor into the organelle membrane with the concomitant translocation of the cargo into the peroxisome matrix. In Pichia angusta (Yeast), this protein is Peroxisomal membrane protein PEX14.